Consider the following 98-residue polypeptide: Glutaredoxin 1 (98 aa).

The 98-residue stretch at 1 to 98 (MNKAILHAII…KLLEGQPKKD (98 aa)) folds into the Glutaredoxin domain. C17 and C20 are joined by a disulfide.

Belongs to the glutaredoxin family. Monomer.

It is found in the cytoplasm. In terms of biological role, has a glutathione-disulfide oxidoreductase activity in the presence of NADPH and glutathione reductase. Reduces low molecular weight disulfides and proteins. The sequence is that of Glutaredoxin 1 (grxC1) from Rickettsia bellii (strain RML369-C).